The chain runs to 130 residues: Small ribosomal subunit protein uS11 (130 aa).

The protein belongs to the universal ribosomal protein uS11 family. Part of the 30S ribosomal subunit. Interacts with proteins S7 and S18. Binds to IF-3.

Functionally, located on the platform of the 30S subunit, it bridges several disparate RNA helices of the 16S rRNA. Forms part of the Shine-Dalgarno cleft in the 70S ribosome. This is Small ribosomal subunit protein uS11 from Prochlorococcus marinus (strain AS9601).